The sequence spans 350 residues: Biotin synthase (350 aa).

The region spanning 38–256 (NYVQVSTLLS…IAIARIMMPQ (219 aa)) is the Radical SAM core domain. [4Fe-4S] cluster contacts are provided by Cys-53, Cys-57, and Cys-60. [2Fe-2S] cluster contacts are provided by Cys-97, Cys-128, Cys-188, and Arg-260.

Belongs to the radical SAM superfamily. Biotin synthase family. Homodimer. It depends on [4Fe-4S] cluster as a cofactor. The cofactor is [2Fe-2S] cluster.

The enzyme catalyses (4R,5S)-dethiobiotin + (sulfur carrier)-SH + 2 reduced [2Fe-2S]-[ferredoxin] + 2 S-adenosyl-L-methionine = (sulfur carrier)-H + biotin + 2 5'-deoxyadenosine + 2 L-methionine + 2 oxidized [2Fe-2S]-[ferredoxin]. It participates in cofactor biosynthesis; biotin biosynthesis; biotin from 7,8-diaminononanoate: step 2/2. Catalyzes the conversion of dethiobiotin (DTB) to biotin by the insertion of a sulfur atom into dethiobiotin via a radical-based mechanism. This is Biotin synthase from Vibrio campbellii (strain ATCC BAA-1116).